The sequence spans 190 residues: Xanthine phosphoribosyltransferase (190 aa).

Residues L20 and N27 each coordinate xanthine. 128–132 contacts 5-phospho-alpha-D-ribose 1-diphosphate; the sequence is ANGQA. K156 is a binding site for xanthine.

It belongs to the purine/pyrimidine phosphoribosyltransferase family. Xpt subfamily. In terms of assembly, homodimer.

The protein resides in the cytoplasm. It catalyses the reaction XMP + diphosphate = xanthine + 5-phospho-alpha-D-ribose 1-diphosphate. The protein operates within purine metabolism; XMP biosynthesis via salvage pathway; XMP from xanthine: step 1/1. In terms of biological role, converts the preformed base xanthine, a product of nucleic acid breakdown, to xanthosine 5'-monophosphate (XMP), so it can be reused for RNA or DNA synthesis. This Pediococcus pentosaceus (strain ATCC 25745 / CCUG 21536 / LMG 10740 / 183-1w) protein is Xanthine phosphoribosyltransferase.